Consider the following 111-residue polypeptide: Carboxysome shell protein CcmK1 (111 aa).

Residues alanine 4–proline 90 form the BMC domain.

The protein belongs to the bacterial microcompartments protein family. CcmK subfamily. As to quaternary structure, homohexamer. Interacts with full-length CcmM. Forms mixed heterohexamers of all possible stoichiometries with CcmK2, which might form dodecamers. Only very weak interactions with CcmK3 and CcmK4 were seen. Interacts with CcmN and CcmO in the carboxysome.

It is found in the carboxysome. In terms of biological role, one of the shell proteins of the carboxysome, a polyhedral inclusion where RuBisCO (ribulose bisphosphate carboxylase, rbcL-rbcS) is sequestered. Assembles into hexamers which make sheets that form the facets of the polyhedral carboxysome. The hexamer central pore probably regulates metabolite flux. Probably the major shell protein of the carboxysome, a polyhedral inclusion where RuBisCO (ribulose bisphosphate carboxylase, rbcL-rbcS) is sequestered. The central pore probably regulates metabolite flux. Hexamers make sheets that form the facets of the carboxysome. The sequence is that of Carboxysome shell protein CcmK1 from Synechocystis sp. (strain ATCC 27184 / PCC 6803 / Kazusa).